Reading from the N-terminus, the 688-residue chain is Glycine--tRNA ligase beta subunit (688 aa).

Belongs to the class-II aminoacyl-tRNA synthetase family. As to quaternary structure, tetramer of two alpha and two beta subunits.

The protein localises to the cytoplasm. It carries out the reaction tRNA(Gly) + glycine + ATP = glycyl-tRNA(Gly) + AMP + diphosphate. In Listeria welshimeri serovar 6b (strain ATCC 35897 / DSM 20650 / CCUG 15529 / CIP 8149 / NCTC 11857 / SLCC 5334 / V8), this protein is Glycine--tRNA ligase beta subunit.